Here is a 291-residue protein sequence, read N- to C-terminus: Ribosomal RNA small subunit methyltransferase A (291 aa).

S-adenosyl-L-methionine is bound by residues asparagine 29, leucine 31, glycine 56, glutamate 77, aspartate 102, and asparagine 127.

It belongs to the class I-like SAM-binding methyltransferase superfamily. rRNA adenine N(6)-methyltransferase family. RsmA subfamily.

It localises to the cytoplasm. The enzyme catalyses adenosine(1518)/adenosine(1519) in 16S rRNA + 4 S-adenosyl-L-methionine = N(6)-dimethyladenosine(1518)/N(6)-dimethyladenosine(1519) in 16S rRNA + 4 S-adenosyl-L-homocysteine + 4 H(+). Functionally, specifically dimethylates two adjacent adenosines (A1518 and A1519) in the loop of a conserved hairpin near the 3'-end of 16S rRNA in the 30S particle. May play a critical role in biogenesis of 30S subunits. The protein is Ribosomal RNA small subunit methyltransferase A of Geobacillus sp. (strain WCH70).